Here is a 478-residue protein sequence, read N- to C-terminus: MTLSFITRWRDELPETYTALSPTPLNNARLIWHNTELANTLSIPSSLFKNGAGVWGGETLLPGMSPLAQVYSGHQFGVWAGQLGDGRGILLGEQLLADGTTMDWHLKGAGLTPYSRMGDGRAVLRSTIRESLASEAMHYLGIPTTRALSIVTSDSPVYRETVESGAMLMRVAPSHLRFGHFEHFYYRREPEKVRQLADFAIRHYWSHLDDEEDKYRLWFTDVVARTASLIAQWQTVGFAHGVMNTDNMSLLGLTLDYGPFGFLDDYEPGFICNHSDHQGRYSFDNQPAVALWNLQRLAQTLSPFVAVDGLNEALDSYQQVLLTHYGQRMRQKLGFMTEQKEDNALLNELFSLMARERSDYTRTFRMLSLTEQHSAASPLRDEFIDRAAFDDWFARYRVRLQQDEVTDSERQQLMQSVNPALVLRNWLAQRAIEAAEKGDMTELHRLHEALRNPFSDRDDDYVSRPPDWGKRLEVSCSS.

ATP is bound by residues G84, G86, R87, K107, D119, G120, R170, and R177. The active-site Proton acceptor is D246. Mg(2+) is bound by residues N247 and D256. D256 contributes to the ATP binding site.

The protein belongs to the SELO family. Requires Mg(2+) as cofactor. The cofactor is Mn(2+).

The enzyme catalyses L-seryl-[protein] + ATP = 3-O-(5'-adenylyl)-L-seryl-[protein] + diphosphate. It carries out the reaction L-threonyl-[protein] + ATP = 3-O-(5'-adenylyl)-L-threonyl-[protein] + diphosphate. It catalyses the reaction L-tyrosyl-[protein] + ATP = O-(5'-adenylyl)-L-tyrosyl-[protein] + diphosphate. The catalysed reaction is L-histidyl-[protein] + UTP = N(tele)-(5'-uridylyl)-L-histidyl-[protein] + diphosphate. The enzyme catalyses L-seryl-[protein] + UTP = O-(5'-uridylyl)-L-seryl-[protein] + diphosphate. It carries out the reaction L-tyrosyl-[protein] + UTP = O-(5'-uridylyl)-L-tyrosyl-[protein] + diphosphate. In terms of biological role, nucleotidyltransferase involved in the post-translational modification of proteins. It can catalyze the addition of adenosine monophosphate (AMP) or uridine monophosphate (UMP) to a protein, resulting in modifications known as AMPylation and UMPylation. In Escherichia coli O81 (strain ED1a), this protein is Protein nucleotidyltransferase YdiU.